Consider the following 662-residue polypeptide: Putative cysteine-rich receptor-like protein kinase 16 (662 aa).

Positions 1–26 are cleaved as a signal peptide; that stretch reads MIFIMKLKNLLPIFCFFLVSFSISSA. 2 consecutive Gnk2-homologous domains span residues 27–131 and 137–244; these read QKCG…NRSF and MTPF…LYQF. Residues 27–277 are Extracellular-facing; the sequence is QKCGKTGLFK…DDGGKISTRN (251 aa). N-linked (GlcNAc...) asparagine glycosylation is found at asparagine 55, asparagine 64, asparagine 106, asparagine 128, asparagine 145, asparagine 152, and asparagine 206. Residues 278-298 form a helical membrane-spanning segment; sequence ILGITVALAFFITVLLVLGYA. Residues 299–662 lie on the Cytoplasmic side of the membrane; it reads LSRRRKAYQE…DASITSVDLR (364 aa). Residues 335–612 enclose the Protein kinase domain; sequence FQKSNKLGHG…VFQMLTNTFL (278 aa). ATP-binding positions include 341–349 and lysine 363; that span reads LGHGGFGEV. Catalysis depends on aspartate 460, which acts as the Proton acceptor.

The protein belongs to the protein kinase superfamily. Ser/Thr protein kinase family. CRK subfamily.

The protein resides in the membrane. The catalysed reaction is L-seryl-[protein] + ATP = O-phospho-L-seryl-[protein] + ADP + H(+). The enzyme catalyses L-threonyl-[protein] + ATP = O-phospho-L-threonyl-[protein] + ADP + H(+). The protein is Putative cysteine-rich receptor-like protein kinase 16 (CRK16) of Arabidopsis thaliana (Mouse-ear cress).